A 632-amino-acid polypeptide reads, in one-letter code: Chaperone protein HtpG (632 aa).

The tract at residues 1–339 is a; substrate-binding; that stretch reads MTQQTMSFQA…SSDLPLNVSR (339 aa). The interval 340-559 is b; sequence EILQESRDVK…DNDMSGYLQR (220 aa). The tract at residues 560–632 is c; that stretch reads MLKAAGQSAP…TNALLLSRAA (73 aa).

Belongs to the heat shock protein 90 family. As to quaternary structure, homodimer.

It is found in the cytoplasm. Molecular chaperone. Has ATPase activity. This is Chaperone protein HtpG from Burkholderia mallei (strain NCTC 10247).